The sequence spans 179 residues: Inner membrane-spanning protein YciB (179 aa).

The next 5 helical transmembrane spans lie at 22–42, 50–70, 76–96, 121–141, and 149–169; these read IYAA…YSWV, MALI…FFHN, WKVT…QWVM, LAWA…AFWL, and FKVF…GVYI.

Belongs to the YciB family.

The protein localises to the cell inner membrane. In terms of biological role, plays a role in cell envelope biogenesis, maintenance of cell envelope integrity and membrane homeostasis. In Citrobacter koseri (strain ATCC BAA-895 / CDC 4225-83 / SGSC4696), this protein is Inner membrane-spanning protein YciB.